Consider the following 326-residue polypeptide: H-2 class I histocompatibility antigen, Q8 alpha chain (326 aa).

A signal peptide spans Met-1–Ala-21. The tract at residues Gly-22–Gly-111 is alpha-1. Residues Gly-22–Met-305 lie on the Extracellular side of the membrane. Residue Asn-107 is glycosylated (N-linked (GlcNAc...) asparagine). The alpha-2 stretch occupies residues Gly-112–Thr-203. 2 disulfides stabilise this stretch: Cys-122–Cys-185 and Cys-224–Cys-280. Residues Asp-204 to Trp-295 are alpha-3. The Ig-like C1-type domain maps to Pro-206 to Arg-294. N-linked (GlcNAc...) asparagine glycosylation is present at Asn-277. Positions Glu-296–Met-305 are connecting peptide. Residues Ala-306–Leu-326 traverse the membrane as a helical segment.

The protein belongs to the MHC class I family. In terms of assembly, heterodimer of an alpha chain and a beta chain (beta-2-microglobulin).

The protein resides in the membrane. Functionally, involved in the presentation of foreign antigens to the immune system. The polypeptide is H-2 class I histocompatibility antigen, Q8 alpha chain (H2-Q8) (Mus musculus (Mouse)).